A 292-amino-acid polypeptide reads, in one-letter code: Succinate dehydrogenase assembly factor 2, mitochondrial (292 aa).

Disordered stretches follow at residues 27–68 and 266–292; these read RSFG…NTTS and TGFHAAKSKKTGGAGLGRMPNVQVFDS. A compositionally biased stretch (polar residues) spans 55–68; the sequence is TNRPPNQHVPNTTS.

Belongs to the SDHAF2 family. Interacts with the flavoprotein subunit within the SDH catalytic dimer.

The protein localises to the mitochondrion matrix. Plays an essential role in the assembly of succinate dehydrogenase (SDH), an enzyme complex (also referred to as respiratory complex II) that is a component of both the tricarboxylic acid (TCA) cycle and the mitochondrial electron transport chain, and which couples the oxidation of succinate to fumarate with the reduction of ubiquinone (coenzyme Q) to ubiquinol. Required for flavinylation (covalent attachment of FAD) of the flavoprotein subunit of the SDH catalytic dimer. The sequence is that of Succinate dehydrogenase assembly factor 2, mitochondrial from Aspergillus flavus (strain ATCC 200026 / FGSC A1120 / IAM 13836 / NRRL 3357 / JCM 12722 / SRRC 167).